The primary structure comprises 358 residues: NADH-quinone oxidoreductase subunit H (358 aa).

A run of 8 helical transmembrane segments spans residues 20–40, 95–115, 128–148, 168–188, 206–226, 253–273, 295–315, and 334–354; these read ITVG…IPLI, ALFY…WAVI, IGLL…IIAG, ISYE…SGSM, VFSW…ISAV, GFAF…IAAL, TPSA…YLWI, and VLIP…ISPL.

It belongs to the complex I subunit 1 family. In terms of assembly, NDH-1 is composed of 14 different subunits. Subunits NuoA, H, J, K, L, M, N constitute the membrane sector of the complex.

The protein resides in the cell inner membrane. The catalysed reaction is a quinone + NADH + 5 H(+)(in) = a quinol + NAD(+) + 4 H(+)(out). In terms of biological role, NDH-1 shuttles electrons from NADH, via FMN and iron-sulfur (Fe-S) centers, to quinones in the respiratory chain. The immediate electron acceptor for the enzyme in this species is believed to be ubiquinone. Couples the redox reaction to proton translocation (for every two electrons transferred, four hydrogen ions are translocated across the cytoplasmic membrane), and thus conserves the redox energy in a proton gradient. This subunit may bind ubiquinone. The chain is NADH-quinone oxidoreductase subunit H from Neisseria meningitidis serogroup B (strain ATCC BAA-335 / MC58).